The primary structure comprises 342 residues: Protein-glutamate methylesterase/protein-glutamine glutaminase 1 (342 aa).

In terms of domain architecture, Response regulatory spans 3–121; it reads RVLVIDDSLF…NIREIGGELK (119 aa). 4-aspartylphosphate is present on Asp-54. A CheB-type methylesterase domain is found at 141–340; sequence DSNARNVVLI…EKIVETIRAM (200 aa). Residues Ser-153, His-180, and Asp-282 contribute to the active site.

Belongs to the CheB family. Post-translationally, phosphorylated by CheA. Phosphorylation of the N-terminal regulatory domain activates the methylesterase activity.

It localises to the cytoplasm. The enzyme catalyses [protein]-L-glutamate 5-O-methyl ester + H2O = L-glutamyl-[protein] + methanol + H(+). It carries out the reaction L-glutaminyl-[protein] + H2O = L-glutamyl-[protein] + NH4(+). In terms of biological role, involved in chemotaxis. Part of a chemotaxis signal transduction system that modulates chemotaxis in response to various stimuli. Catalyzes the demethylation of specific methylglutamate residues introduced into the chemoreceptors (methyl-accepting chemotaxis proteins or MCP) by CheR. Also mediates the irreversible deamidation of specific glutamine residues to glutamic acid. The protein is Protein-glutamate methylesterase/protein-glutamine glutaminase 1 of Methanospirillum hungatei JF-1 (strain ATCC 27890 / DSM 864 / NBRC 100397 / JF-1).